Consider the following 138-residue polypeptide: MLQPSRRKYRKEQKGRNTGLATRGAQVSFGEFGLKATGRGRLTARQIEAARRAINRHIKRGGRIWIRIFPDKPISQKPAEVRMGNGKGNPEYWVAEIQPGKVLYEMEGVSEELAREAFRLAAAKLPISTTFVARHIGA.

Positions 1–13 (MLQPSRRKYRKEQ) are enriched in basic residues. Residues 1 to 20 (MLQPSRRKYRKEQKGRNTGL) form a disordered region.

It belongs to the universal ribosomal protein uL16 family. In terms of assembly, part of the 50S ribosomal subunit.

Its function is as follows. Binds 23S rRNA and is also seen to make contacts with the A and possibly P site tRNAs. This chain is Large ribosomal subunit protein uL16, found in Bordetella avium (strain 197N).